Here is a 717-residue protein sequence, read N- to C-terminus: MDAVDSTRAFVKGVKRVIIKVGTAVVTRADGRLALGRLGALCEQIHELNSQGFEVILVTSGAVGVGRQRLRYRKLVNSSFADLQKPQIELDGKACAAVGQNGLLALYDTLFSQLDVTSAQLLVTDNDFRDPEFRKQLTETVESLLNLKVIPIFNENDAVSTRKAPYEDASGIFWDNDSLAALLALELKADLLVLLSDVEGLYSGPPSDPQSKLIHTYIKEMFEGLITFGDKSRVGRGGMTAKVKAAVYAAHAGIPVVITSGYATNNIIKVLQGERIGTLFHRDAQKWAPVGDVGARDMAVAARESSRRLQAMSPQDRSKILLDVADALEANEKLIRIENEADLAAAQQAGYEKSLISRLALKSGKISSLAKSIRVLANMEEPIGHVLKRTEITDGLVLEKTSSPLGVLLIIFESRPDALVQIASLAIRSGNGLVLKGGKEAKRSNAILHKVITSAIPENVGPRLIGLVTSREEIPDLLKLDDVIDLVIPRGSNKLVSQIKESTKIPVLGHADGICHVYVDKSANMDMAKKVVLDAKTDYPAACNAMETLLVHKDLVQNGCLDELIVELQIKGVVIHGGPRASSLLHIPEARSLHHEYSSLACTIEIVDDVYAAIDHIHRHGSAHTDSIITEDHEVAEIFLRQVDSSSVLHNASTRFSDGARFGLGAEVGISTSRIHARGPVGVEGLLTTRWIARGSGQVVDGDKGIVYTHKDLTSHA.

The segment at 1-296 (MDAVDSTRAF…WAPVGDVGAR (296 aa)) is glutamate 5-kinase. 3 residues coordinate substrate: Ser60, Asp157, and Asn176. ATP is bound by residues 196–197 (SD) and 236–242 (RGGMTAK). The interval 297–717 (DMAVAARESS…YTHKDLTSHA (421 aa)) is gamma-glutamyl phosphate reductase.

This sequence in the N-terminal section; belongs to the glutamate 5-kinase family. In the C-terminal section; belongs to the gamma-glutamyl phosphate reductase family. Expressed at high levels in leaves and is inducible in roots subjected to salt stress.

It carries out the reaction L-glutamate + ATP = L-glutamyl 5-phosphate + ADP. It catalyses the reaction L-glutamate 5-semialdehyde + phosphate + NADP(+) = L-glutamyl 5-phosphate + NADPH + H(+). The protein operates within amino-acid biosynthesis; L-proline biosynthesis; L-glutamate 5-semialdehyde from L-glutamate: step 1/2. Its pathway is amino-acid biosynthesis; L-proline biosynthesis; L-glutamate 5-semialdehyde from L-glutamate: step 2/2. Its activity is regulated as follows. Feedback regulated by proline. Its function is as follows. P5CS plays a key role in proline biosynthesis, leading to osmoregulation in plants. This Actinidia deliciosa (Kiwi) protein is Delta-1-pyrroline-5-carboxylate synthase.